Here is a 569-residue protein sequence, read N- to C-terminus: 2-succinyl-5-enolpyruvyl-6-hydroxy-3-cyclohexene-1-carboxylate synthase (569 aa).

Belongs to the TPP enzyme family. MenD subfamily. Homodimer. It depends on Mg(2+) as a cofactor. Requires Mn(2+) as cofactor. Thiamine diphosphate serves as cofactor.

It carries out the reaction isochorismate + 2-oxoglutarate + H(+) = 5-enolpyruvoyl-6-hydroxy-2-succinyl-cyclohex-3-ene-1-carboxylate + CO2. It functions in the pathway quinol/quinone metabolism; 1,4-dihydroxy-2-naphthoate biosynthesis; 1,4-dihydroxy-2-naphthoate from chorismate: step 2/7. It participates in quinol/quinone metabolism; menaquinone biosynthesis. Catalyzes the thiamine diphosphate-dependent decarboxylation of 2-oxoglutarate and the subsequent addition of the resulting succinic semialdehyde-thiamine pyrophosphate anion to isochorismate to yield 2-succinyl-5-enolpyruvyl-6-hydroxy-3-cyclohexene-1-carboxylate (SEPHCHC). The protein is 2-succinyl-5-enolpyruvyl-6-hydroxy-3-cyclohexene-1-carboxylate synthase of Haemophilus ducreyi (strain 35000HP / ATCC 700724).